The sequence spans 556 residues: Serine/threonine-protein kinase PksC (556 aa).

Residues 20–287 (YQLRDLLGEG…SAEAMRDECL (268 aa)) form the Protein kinase domain. Residues 26-34 (LGEGGMASV) and K49 contribute to the ATP site. D151 acts as the Proton acceptor in catalysis. 2 disordered regions span residues 300–403 (IVPG…PGGK) and 435–485 (EDPE…DPDK). Pro residues predominate over residues 336-348 (QPTPSPGPNPYGT). Composition is skewed to low complexity over residues 360 to 381 (YPQQ…QAAA) and 445 to 458 (STAS…KAAG). Positions 461-475 (GPDKEKTIEKDKCTE) are enriched in basic and acidic residues. Positions 482-550 (DPDKIQVPDF…MPEIQLKVST (69 aa)) constitute a PASTA domain.

This sequence belongs to the protein kinase superfamily. Ser/Thr protein kinase family.

It carries out the reaction L-seryl-[protein] + ATP = O-phospho-L-seryl-[protein] + ADP + H(+). The catalysed reaction is L-threonyl-[protein] + ATP = O-phospho-L-threonyl-[protein] + ADP + H(+). The chain is Serine/threonine-protein kinase PksC (pksC) from Streptomyces coelicolor (strain ATCC BAA-471 / A3(2) / M145).